The following is a 256-amino-acid chain: MILVFDVGNTNIVLGVFSGSRLVANWRLSTDRYRTSDEYGIMLRELFAFSGLEMKQIKAVVVSTVVPPLTFTLERLCQKYFNLTPLVVGPGIKTGLSIKIDNPREVGADRIVNAVAGYEQYGGPLVIVDFGTATTFCAVSARGEYLGGAIAPGISISTEALFARAAKLPRVEVVKPLSVIGRNTVASMQAGIFYGFVGQVDEIVKRMKKELGENTRVIATGGLAGLIAQESATIEQVDPFLTLKGLRLIYERNAQR.

6–13 (DVGNTNIV) contributes to the ATP binding site. Position 107-110 (107-110 (GADR)) interacts with substrate. D109 (proton acceptor) is an active-site residue. Position 129 (D129) interacts with K(+). Residue T132 participates in ATP binding. Position 184 (T184) interacts with substrate.

It belongs to the type III pantothenate kinase family. Homodimer. Requires NH4(+) as cofactor. It depends on K(+) as a cofactor.

It localises to the cytoplasm. The catalysed reaction is (R)-pantothenate + ATP = (R)-4'-phosphopantothenate + ADP + H(+). Its pathway is cofactor biosynthesis; coenzyme A biosynthesis; CoA from (R)-pantothenate: step 1/5. Catalyzes the phosphorylation of pantothenate (Pan), the first step in CoA biosynthesis. This is Type III pantothenate kinase from Pelotomaculum thermopropionicum (strain DSM 13744 / JCM 10971 / SI).